A 569-amino-acid chain; its full sequence is Synaptotagmin-4 (569 aa).

The helical transmembrane segment at 1–21 (MGFLFGLFIGIAVSFGLVVAF) threads the bilayer. The region spanning 67–251 (QRQKLNWLNL…WPVRKIIPIL (185 aa)) is the SMP-LTD domain. The phospholipid binding stretch occupies residues 229–531 (EETIRDAIED…KIGRVIMTLT (303 aa)). 2 consecutive C2 domains span residues 245-366 (RKII…DIWL) and 426-543 (TDMK…QEWF). 5 residues coordinate Ca(2+): aspartate 459, aspartate 465, aspartate 514, aspartate 516, and aspartate 521.

It belongs to the synaptotagmin family. Ca(2+) is required as a cofactor.

The protein localises to the membrane. In terms of biological role, may be involved in membrane trafficking. In Arabidopsis thaliana (Mouse-ear cress), this protein is Synaptotagmin-4 (SYT4).